Reading from the N-terminus, the 743-residue chain is Serine/threonine-protein kinase GD17699 (743 aa).

The disordered stretch occupies residues 54 to 78; the sequence is NVQEDNSYNRDCDSPVSSSSEPEKE. Doublecortin domains follow at residues 154–240 and 309–392; these read LRIK…VEYN and RIVT…AEDF. Residues 473 to 731 enclose the Protein kinase domain; it reads YTLGRIIGDG…SEDILDHPWT (259 aa). ATP is bound by residues 479–487 and K502; that span reads IGDGNFAIV. The Proton acceptor role is filled by D594.

This sequence belongs to the protein kinase superfamily. CAMK Ser/Thr protein kinase family. CaMK subfamily.

The enzyme catalyses L-seryl-[protein] + ATP = O-phospho-L-seryl-[protein] + ADP + H(+). The catalysed reaction is L-threonyl-[protein] + ATP = O-phospho-L-threonyl-[protein] + ADP + H(+). This is Serine/threonine-protein kinase GD17699 from Drosophila simulans (Fruit fly).